A 391-amino-acid chain; its full sequence is NADH-quinone oxidoreductase subunit D (391 aa).

Belongs to the complex I 49 kDa subunit family. As to quaternary structure, NDH-1 is composed of 14 different subunits. Subunits NuoB, C, D, E, F, and G constitute the peripheral sector of the complex.

It localises to the cell inner membrane. It catalyses the reaction a quinone + NADH + 5 H(+)(in) = a quinol + NAD(+) + 4 H(+)(out). Functionally, NDH-1 shuttles electrons from NADH, via FMN and iron-sulfur (Fe-S) centers, to quinones in the respiratory chain. The immediate electron acceptor for the enzyme in this species is believed to be ubiquinone. Couples the redox reaction to proton translocation (for every two electrons transferred, four hydrogen ions are translocated across the cytoplasmic membrane), and thus conserves the redox energy in a proton gradient. This Rickettsia rickettsii (strain Iowa) protein is NADH-quinone oxidoreductase subunit D.